Here is a 261-residue protein sequence, read N- to C-terminus: Aminoglycoside N(3)-acetyltransferase IV (261 aa).

This sequence belongs to the antibiotic N-acetyltransferase family.

It carries out the reaction a 2-deoxystreptamine antibiotic + acetyl-CoA = an N(3)-acetyl-2-deoxystreptamine antibiotic + CoA + H(+). In terms of biological role, resistance to antibiotics containing the 2-deoxy-streptamine ring including gentamicin, kanamycin, tobramycin, neomycin and apramycin. This is Aminoglycoside N(3)-acetyltransferase IV (aacC4) from Salmonella sp.